We begin with the raw amino-acid sequence, 93 residues long: Cobalt transport protein CbiN (93 aa).

A run of 2 helical transmembrane segments spans residues leucine 5–glycine 25 and leucine 63–alanine 83.

This sequence belongs to the CbiN family. Forms an energy-coupling factor (ECF) transporter complex composed of an ATP-binding protein (A component, CbiO), a transmembrane protein (T component, CbiQ) and 2 possible substrate-capture proteins (S components, CbiM and CbiN) of unknown stoichimetry.

Its subcellular location is the cell inner membrane. The protein operates within cofactor biosynthesis; adenosylcobalamin biosynthesis. Its function is as follows. Part of the energy-coupling factor (ECF) transporter complex CbiMNOQ involved in cobalt import. This chain is Cobalt transport protein CbiN, found in Klebsiella pneumoniae (strain 342).